We begin with the raw amino-acid sequence, 511 residues long: MSKKPAALIILDGFGLRNETVGNAVAQAKKPNFDRYWNQYPHQTLTASGEAVGLPEGQMGNSEVGHLNIGAGRIVYQSLTRVNVAIREGEFERNQTFLDAIKNAKDNDKALHLFGLLSDGGVHSHINHLFALLKLAKSEGLTKVYIHGFLDGRDVGPQTAKTYIQQLNEQVEEIGVGEIASISGRYYSMDRDKRWDRVEKAYRAMAYGEGPSYRSAMDVVDDSYANGIHDEFVIPSVITKENGEPVAKIHDGDSVIFYNFRPDRAIQISNTFTNKDFRDFDRGENHPKNLYFVCLTHFSESVDGYVAFKPVNLDNTVGEVLAQHGLKQLRIAETEKYPHVTFFMSGGREEEFPGEERILINSPKVATYDLKPEMSAYEVKDALVKEIAADKHDAIILNFANPDMVGHSGMVEPTIKAIEAVDECLGEVVDAIIAKGGHAIITADHGNADILITETGEPHTAHTTNPVPVIVTKEGVTLREGGILGDLAPTLLDLLGVEKPKEMTGTSLIQK.

Residue Asp-12 coordinates Mn(2+). Tyr-36 carries the phosphotyrosine modification. Mn(2+) is bound at residue Ser-62. The active-site Phosphoserine intermediate is the Ser-62. Substrate-binding positions include His-123, 153-154 (RD), Arg-185, Arg-191, 261-264 (RPDR), and Lys-336. Asp-403, His-407, Asp-444, His-445, and His-462 together coordinate Mn(2+).

The protein belongs to the BPG-independent phosphoglycerate mutase family. As to quaternary structure, monomer. Requires Mn(2+) as cofactor.

It carries out the reaction (2R)-2-phosphoglycerate = (2R)-3-phosphoglycerate. It functions in the pathway carbohydrate degradation; glycolysis; pyruvate from D-glyceraldehyde 3-phosphate: step 3/5. Functionally, essential for rapid growth and for sporulation. Catalyzes the interconversion of 2-phosphoglycerate and 3-phosphoglycerate. This is 2,3-bisphosphoglycerate-independent phosphoglycerate mutase from Bacillus velezensis (strain DSM 23117 / BGSC 10A6 / LMG 26770 / FZB42) (Bacillus amyloliquefaciens subsp. plantarum).